The chain runs to 469 residues: Ribulose bisphosphate carboxylase large chain (469 aa).

Positions 1–2 (MS) are excised as a propeptide. An N-acetylproline modification is found at proline 3. An N6,N6,N6-trimethyllysine modification is found at lysine 14. 2 residues coordinate substrate: asparagine 123 and threonine 173. The active-site Proton acceptor is the lysine 175. Substrate is bound at residue lysine 177. Mg(2+) contacts are provided by lysine 201, aspartate 203, and glutamate 204. N6-carboxylysine is present on lysine 201. The Proton acceptor role is filled by histidine 294. Residues arginine 295, histidine 327, and serine 379 each coordinate substrate.

The protein belongs to the RuBisCO large chain family. Type I subfamily. In terms of assembly, heterohexadecamer of 8 large chains and 8 small chains; disulfide-linked. The disulfide link is formed within the large subunit homodimers. Mg(2+) serves as cofactor. Post-translationally, the disulfide bond which can form in the large chain dimeric partners within the hexadecamer appears to be associated with oxidative stress and protein turnover.

It localises to the plastid. Its subcellular location is the chloroplast. It catalyses the reaction 2 (2R)-3-phosphoglycerate + 2 H(+) = D-ribulose 1,5-bisphosphate + CO2 + H2O. The catalysed reaction is D-ribulose 1,5-bisphosphate + O2 = 2-phosphoglycolate + (2R)-3-phosphoglycerate + 2 H(+). Functionally, ruBisCO catalyzes two reactions: the carboxylation of D-ribulose 1,5-bisphosphate, the primary event in carbon dioxide fixation, as well as the oxidative fragmentation of the pentose substrate in the photorespiration process. Both reactions occur simultaneously and in competition at the same active site. In Atriplex patula (Common orache), this protein is Ribulose bisphosphate carboxylase large chain.